The chain runs to 256 residues: Small ribosomal subunit protein uS2 (256 aa).

This sequence belongs to the universal ribosomal protein uS2 family.

The protein is Small ribosomal subunit protein uS2 of Ruegeria sp. (strain TM1040) (Silicibacter sp.).